Reading from the N-terminus, the 149-residue chain is MKVIFLQDVKGKGKKGEVKNVADGYAHNFLIKKGLAVEANASNISALNGQKQKEKKEAIAELEQAKSLKETLEKLTVELSAKSGEGGRLFGSVTSKQITEQLQKDHNIKVDKRKLELPDGIRALGYTNVPVKLHPEVQAVLKVHVKEEA.

The protein belongs to the bacterial ribosomal protein bL9 family. As to quaternary structure, part of the 50S ribosomal subunit. In stalled/collided disomes (pairs of ribosomes where the leading ribosome is stalled and a second ribosome has collided with it), bL9 in the collided ribosome contacts bS6 and uL2, while it contacts only helices of the 16S rRNA in the stalled ribosome; the inter-ribosome bridge thus formed is different from that formed between normally translating ribosomes.

Binds to the 23S rRNA. This Bacillus subtilis (strain 168) protein is Large ribosomal subunit protein bL9.